A 265-amino-acid polypeptide reads, in one-letter code: Hydroxyethylthiazole kinase (265 aa).

Met43 is a binding site for substrate. ATP-binding residues include Arg119 and Ser165. Ala192 contributes to the substrate binding site.

This sequence belongs to the Thz kinase family. Mg(2+) is required as a cofactor.

It catalyses the reaction 5-(2-hydroxyethyl)-4-methylthiazole + ATP = 4-methyl-5-(2-phosphooxyethyl)-thiazole + ADP + H(+). The protein operates within cofactor biosynthesis; thiamine diphosphate biosynthesis; 4-methyl-5-(2-phosphoethyl)-thiazole from 5-(2-hydroxyethyl)-4-methylthiazole: step 1/1. Functionally, catalyzes the phosphorylation of the hydroxyl group of 4-methyl-5-beta-hydroxyethylthiazole (THZ). In Haemophilus influenzae (strain 86-028NP), this protein is Hydroxyethylthiazole kinase.